A 1242-amino-acid chain; its full sequence is ATP-dependent RNA helicase DHX8 (1242 aa).

Disordered regions lie at residues Arg-75–Glu-283 and Ser-354–Pro-449. Composition is skewed to basic and acidic residues over residues Thr-87–Ser-97, Tyr-113–Met-141, and Arg-180–Ser-196. 2 stretches are compositionally biased toward basic residues: residues Asp-197–Arg-222 and Asp-232–Ser-252. Residues Arg-253–Glu-269 are compositionally biased toward basic and acidic residues. Residues Gly-285–Lys-356 form the S1 motif domain. The span at Phe-388–Gly-399 shows a compositional bias: polar residues. Residues Pro-439 to Pro-449 are compositionally biased toward acidic residues. Residues Ile-596–Pro-759 enclose the Helicase ATP-binding domain. Residue Gly-609 to Thr-616 participates in ATP binding. Positions Asp-706–His-709 match the DEAH box motif. The Helicase C-terminal domain maps to Tyr-777–Gly-957.

The protein belongs to the DEAD box helicase family. DEAH subfamily. DDX8/PRP22 sub-subfamily. As to quaternary structure, identified in the spliceosome C complex.

It is found in the nucleus. It carries out the reaction ATP + H2O = ADP + phosphate + H(+). Its function is as follows. Involved in pre-mRNA splicing as component of the spliceosome. Facilitates nuclear export of spliced mRNA by releasing the RNA from the spliceosome. Before and after egg-chamber formation, required for nurse-cell chromatin dispersal (NCCD) probably by playing a role in spliceosome localization to chromatin/interchromatin spaces. The chain is ATP-dependent RNA helicase DHX8 from Drosophila melanogaster (Fruit fly).